A 103-amino-acid chain; its full sequence is Large ribosomal subunit protein uL24 (103 aa).

Belongs to the universal ribosomal protein uL24 family. As to quaternary structure, part of the 50S ribosomal subunit.

Its function is as follows. One of two assembly initiator proteins, it binds directly to the 5'-end of the 23S rRNA, where it nucleates assembly of the 50S subunit. In terms of biological role, one of the proteins that surrounds the polypeptide exit tunnel on the outside of the subunit. The sequence is that of Large ribosomal subunit protein uL24 from Lacticaseibacillus casei (strain BL23) (Lactobacillus casei).